The sequence spans 102 residues: Transposable element activator uncharacterized 12 kDa protein (102 aa).

Residues 24-51 (HNHNQNHNHSHNLNPKKKHHRRGQRSAH) are compositionally biased toward basic residues. A disordered region spans residues 24–55 (HNHNQNHNHSHNLNPKKKHHRRGQRSAHRMYG).

The protein is Transposable element activator uncharacterized 12 kDa protein of Zea mays (Maize).